Consider the following 372-residue polypeptide: Zinc finger protein dpff-1 (372 aa).

Positions 108–204 (VGPTTESVSD…SRSIVKETKY (97 aa)) are disordered. Polar residues predominate over residues 109–131 (GPTTESVSDSSNDSTTIRPSRQT). Residues 132 to 141 (QIKEEYRDDY) show a composition bias toward basic and acidic residues. Over residues 142-158 (VLDDELSPDEFGSDEDD) the composition is skewed to acidic residues. Polar residues predominate over residues 184-196 (TTRSSVSRLTPSR). A C2H2-type zinc finger spans residues 212–235 (YPCDKCSAKYKSLAGLSYHQSYLH). 2 PHD-type zinc fingers span residues 256–314 (SCDF…CKSC) and 316–361 (ICGT…CQVE).

It belongs to the requiem/DPF family.

It is found in the nucleus. The protein resides in the cytoplasm. Functionally, probable transcription factor, involved in meiosis and stress protection. The protein is Zinc finger protein dpff-1 of Caenorhabditis elegans.